Here is a 760-residue protein sequence, read N- to C-terminus: Formin-like protein 8 (760 aa).

An N-terminal signal peptide occupies residues 1–29 (MAAMFNHPWPNLTLIYFFFIVVLPFQSLS). The segment covering 52–63 (PLLPPSSNPSPP) has biased composition (pro residues). A disordered region spans residues 52–71 (PLLPPSSNPSPPSNNSSSSD). Residues 78–98 (AVLITAASTLLVAGVFFFCLQ) traverse the membrane as a helical segment. Residues 204–313 (TEIPLLRGRS…VKLKPLHWDK (110 aa)) form a disordered region. A compositionally biased stretch (pro residues) spans 253–274 (TPSPPPPIKKGSSPSPPPPPPV). An FH2 domain is found at 296-732 (SGGETSKQVK…GSPISPSSQR (437 aa)).

It belongs to the formin-like family. Class-I subfamily. As to quaternary structure, interacts with profilin.

The protein localises to the cell membrane. Functionally, might be involved in the organization and polarity of the actin cytoskeleton. Interacts with the barbed end of actin filaments and nucleates actin-filament polymerization in vitro. The protein is Formin-like protein 8 (FH8) of Arabidopsis thaliana (Mouse-ear cress).